Here is a 360-residue protein sequence, read N- to C-terminus: GTPase Obg (360 aa).

The Obg domain maps to 1–156 (MFVDSVEIII…KCVRLELKLI (156 aa)). In terms of domain architecture, OBG-type G spans 157-360 (ADIGLVGFPN…LKFVLLKALQ (204 aa)). GTP contacts are provided by residues 163 to 170 (GFPNAGKS), 188 to 192 (FTTLV), 210 to 213 (DIPG), 279 to 282 (NKCD), and 341 to 343 (SAV). Mg(2+) is bound by residues serine 170 and threonine 190.

It belongs to the TRAFAC class OBG-HflX-like GTPase superfamily. OBG GTPase family. In terms of assembly, monomer. Mg(2+) is required as a cofactor.

The protein resides in the cytoplasm. In terms of biological role, an essential GTPase which binds GTP, GDP and possibly (p)ppGpp with moderate affinity, with high nucleotide exchange rates and a fairly low GTP hydrolysis rate. Plays a role in control of the cell cycle, stress response, ribosome biogenesis and in those bacteria that undergo differentiation, in morphogenesis control. The sequence is that of GTPase Obg from Helicobacter pylori (strain J99 / ATCC 700824) (Campylobacter pylori J99).